The following is a 695-amino-acid chain: UvrABC system protein B (695 aa).

In terms of domain architecture, Helicase ATP-binding spans 25 to 176 (KSISEGHRFQ…NQRDVLRDLA (152 aa)). 38-45 (GATGTGKT) provides a ligand contact to ATP. Residues 91 to 114 (YYDYYQPEAYVPSTDTYIAKSSSI) carry the Beta-hairpin motif. Positions 454 to 617 (LLGEIYLRLE…ITPKPIVKKN (164 aa)) constitute a Helicase C-terminal domain. The region spanning 652-687 (PELIGQLELKMKEAAKNLEFEEAAQLRDRIKKLRQR) is the UVR domain.

This sequence belongs to the UvrB family. In terms of assembly, forms a heterotetramer with UvrA during the search for lesions. Interacts with UvrC in an incision complex.

Its subcellular location is the cytoplasm. In terms of biological role, the UvrABC repair system catalyzes the recognition and processing of DNA lesions. A damage recognition complex composed of 2 UvrA and 2 UvrB subunits scans DNA for abnormalities. Upon binding of the UvrA(2)B(2) complex to a putative damaged site, the DNA wraps around one UvrB monomer. DNA wrap is dependent on ATP binding by UvrB and probably causes local melting of the DNA helix, facilitating insertion of UvrB beta-hairpin between the DNA strands. Then UvrB probes one DNA strand for the presence of a lesion. If a lesion is found the UvrA subunits dissociate and the UvrB-DNA preincision complex is formed. This complex is subsequently bound by UvrC and the second UvrB is released. If no lesion is found, the DNA wraps around the other UvrB subunit that will check the other stand for damage. This chain is UvrABC system protein B, found in Synechococcus sp. (strain JA-2-3B'a(2-13)) (Cyanobacteria bacterium Yellowstone B-Prime).